Consider the following 880-residue polypeptide: Valine--tRNA ligase (880 aa).

Residues 48–58 (PNITGKLHLGH) carry the 'HIGH' region motif. Residues 527–531 (KMSKS) carry the 'KMSKS' region motif. Lysine 530 contributes to the ATP binding site. 2 coiled-coil regions span residues 717 to 741 (KEEL…AIRN) and 810 to 880 (LFDL…KSLK).

This sequence belongs to the class-I aminoacyl-tRNA synthetase family. ValS type 1 subfamily. In terms of assembly, monomer.

The protein localises to the cytoplasm. It catalyses the reaction tRNA(Val) + L-valine + ATP = L-valyl-tRNA(Val) + AMP + diphosphate. Functionally, catalyzes the attachment of valine to tRNA(Val). As ValRS can inadvertently accommodate and process structurally similar amino acids such as threonine, to avoid such errors, it has a 'posttransfer' editing activity that hydrolyzes mischarged Thr-tRNA(Val) in a tRNA-dependent manner. The chain is Valine--tRNA ligase from Clostridium tetani (strain Massachusetts / E88).